A 210-amino-acid polypeptide reads, in one-letter code: Somatotropin (210 aa).

The signal sequence occupies residues 1 to 22 (MGQVFLLMPVLLVSCFLSQGAA). Histidine 38 provides a ligand contact to Zn(2+). A disulfide bond links cysteine 71 and cysteine 183. Glutamate 192 serves as a coordination point for Zn(2+). Residues cysteine 200 and cysteine 208 are joined by a disulfide bond.

The protein belongs to the somatotropin/prolactin family.

Its subcellular location is the secreted. Its function is as follows. Growth hormone plays an important role in growth control and is involved in the regulation of several anabolic processes. Implicated as an osmoregulatory substance important for seawater adaptation. This is Somatotropin (gh) from Oncorhynchus tshawytscha (Chinook salmon).